A 523-amino-acid polypeptide reads, in one-letter code: 2-isopropylmalate synthase (523 aa).

Residues Val-5–His-267 form the Pyruvate carboxyltransferase domain. Residues Asp-14, His-202, His-204, and Asn-238 each contribute to the Mn(2+) site. The interval Glu-392–Val-523 is regulatory domain.

The protein belongs to the alpha-IPM synthase/homocitrate synthase family. LeuA type 1 subfamily. In terms of assembly, homodimer. It depends on Mn(2+) as a cofactor.

It is found in the cytoplasm. It carries out the reaction 3-methyl-2-oxobutanoate + acetyl-CoA + H2O = (2S)-2-isopropylmalate + CoA + H(+). It participates in amino-acid biosynthesis; L-leucine biosynthesis; L-leucine from 3-methyl-2-oxobutanoate: step 1/4. In terms of biological role, catalyzes the condensation of the acetyl group of acetyl-CoA with 3-methyl-2-oxobutanoate (2-ketoisovalerate) to form 3-carboxy-3-hydroxy-4-methylpentanoate (2-isopropylmalate). The chain is 2-isopropylmalate synthase from Shewanella halifaxensis (strain HAW-EB4).